The following is a 279-amino-acid chain: Replication protein A 32 kDa subunit A (279 aa).

The tract at residues 1 to 33 is disordered; it reads MFSSSQFEPNSGFSGGGFMSSQPSQAYESSSST. The span at 19-32 shows a compositional bias: low complexity; the sequence is MSSQPSQAYESSSS. The OB DNA-binding region spans 73-148; it reads VSLVGLVCDK…QLLVFSVRPI (76 aa).

This sequence belongs to the replication factor A protein 2 family. In terms of assembly, heterotrimer of RPA1, RPA2 and RPA3 (canonical replication protein A complex). Interacts with ROS1. Binds to ASE1/At3g02920, PDX2, At5g62350, RPA1A/At2g06510, ARF1/At1g10630, At4g18590 and At3g52630. In terms of processing, phosphorylated in a cell-cycle-dependent manner (from the S phase until mitosis). In response to DNA damage, recruited to DNA-repair nuclear foci, as a hypophosphorylated form. Strongly expressed in shoot and root meristems. Present in seedlings, roots, leaves, siliques and flowers.

It localises to the nucleus. Functionally, component of the replication protein A complex (RPA) required for DNA recombination, repair and replication. The activity of RPA is mediated by single-stranded DNA binding and protein interactions. Required fo cell division in meristems. Involved in the maintenance of transcriptional epigenetic gene silencing (TGS) at specific loci (including some transposons) by regulating histone H3 acetylation, 'Lys-4' and 'Lys-9' methylation. The polypeptide is Replication protein A 32 kDa subunit A (RPA2A) (Arabidopsis thaliana (Mouse-ear cress)).